A 483-amino-acid chain; its full sequence is M protein, serotype 6 (483 aa).

Residues 1-42 form the signal peptide; the sequence is MAKNNTNRHYSLRKLKKGTASVAVALSVIGAGLVVNTNEVSA. A coiled-coil region spans residues 54-171; the sequence is DKARELLNKY…IGTLKKTLDE (118 aa). Repeat copies occupy residues 69–75, 76–82, 83–89, 90–96, 97–103, 104–110, 111–117, and 118–124. The tract at residues 69 to 138 is 10 X 7 AA approximate tandem repeats of [KMNR]-L-[TQ]-[TDA]-[ENQ]-N-[NDK]; it reads MLQANNDKLT…EENRLTTENK (70 aa). Over residues 74–87 the composition is skewed to polar residues; the sequence is NDKLTTENNNLTDQ. Residues 74 to 157 form a disordered region; it reads NDKLTTENNN…EEEAANKERE (84 aa). Low complexity predominate over residues 88 to 113; sequence NKNLTTENKNLTDQNKNLTTENKNLT. Composition is skewed to basic and acidic residues over residues 122–135 and 143–157; these read ENKELKAEENRLTT and KLSEAEEEAANKERE. The stretch at 125 to 131 is one 9-1; approximate repeat; it reads ELKAEEN. Repeat copies occupy residues 132–138, 157–181, 182–206, 207–231, and 232–256. The 4.5 X 25 AA tandem repeats of E-[NS]-K-E-[TA]-I-G-T-L-K-K-[TI]-L-D-E-T-V-K-D-K-I-A-[KR]-E-Q stretch occupies residues 157 to 269; that stretch reads ENKEAIGTLK…QDIGALKQEL (113 aa). Disordered stretches follow at residues 255–298 and 314–345; these read EQKS…EAKK and VKEEKQISDASRQGLRRDLDASREAKKQVEKA. The 5-2; truncated repeat unit spans residues 257–269; it reads KSKQDIGALKQEL. Basic and acidic residues-rich tracts occupy residues 268–298 and 328–345; these read ELAKKDEGNKVSEASRKGLRRDLDASREAKK and LRRDLDASREAKKQVEKA. C repeat units follow at residues 270–304 and 312–346; these read AKKDEGNKVSEASRKGLRRDLDASREAKKQVEKDL and DKVKEEKQISDASRQGLRRDLDASREAKKQVEKAL. A binding to CD46 region spans residues 279 to 347; the sequence is SEASRKGLRR…AKKQVEKALE (69 aa). Residues 279–347 are two directly repeated 27 amino acid blocks separated by 15 amino acids; it reads SEASRKGLRR…AKKQVEKALE (69 aa). Residues 280–408 adopt a coiled-coil conformation; sequence EASRKGLRRD…LAKLRAGKAS (129 aa). Residues 348-411 form a hydrophilic region; it reads EANSKLAALE…LRAGKASDSQ (64 aa). D repeat units follow at residues 379–384, 385–390, 393–398, and 400–405; these read AKLEAE, AKALKE, AKQAEE, and AKLRAG. Positions 400-455 are disordered; it reads AKLRAGKASDSQTPDAKPGNKVVPGKGQAPQAGTKPNQNKAPMKETKRQLPSTGET. Residues 449-453 carry the LPXTG sorting signal motif; it reads LPSTG. A Pentaglycyl murein peptidoglycan amidated threonine modification is found at threonine 452. A propeptide spans 453–483 (removed by sortase); sequence GETANPFFTAAALTVMATAGVAAVVKRKEEN.

The protein belongs to the M protein family.

Its subcellular location is the secreted. It localises to the cell wall. Functionally, mediates the attachment of S.pyogenes to skin epithelial cells through the binding of the human membrane cofactor protein CD46. Also binds to the factor H and factor H-like protein 1. These interactions could contribute to the fact that the M6 protein protects the bacterium from the phagocytosis by regulating the complement activation on the bacterial surface. The sequence is that of M protein, serotype 6 (emm6) from Streptococcus pyogenes.